The sequence spans 235 residues: Large ribosomal subunit protein uL1 (235 aa).

Belongs to the universal ribosomal protein uL1 family. In terms of assembly, part of the 50S ribosomal subunit.

Functionally, binds directly to 23S rRNA. The L1 stalk is quite mobile in the ribosome, and is involved in E site tRNA release. Protein L1 is also a translational repressor protein, it controls the translation of the L11 operon by binding to its mRNA. This chain is Large ribosomal subunit protein uL1, found in Paenarthrobacter aurescens (strain TC1).